Here is a 439-residue protein sequence, read N- to C-terminus: Testican-1 (439 aa).

Positions 1–21 (MPAIAVLAAAAAAWCFLQVES) are cleaved as a signal peptide. Cystine bridges form between C86–C97, C91–C107, C136–C166, C139–C159, and C148–C180. The 53-residue stretch at 130-182 (PSNLVKCKPCPVAQSAMVCGSDGHSYTSKCKLEFHACSTGKSLATLCDGPCPC) folds into the Kazal-like domain. O-linked (GalNAc...) threonine glycosylation is present at T228. The Thyroglobulin type-1 domain maps to 310 to 376 (GLPCQNEMNR…GSRKQGAVSC (67 aa)). Intrachain disulfides connect C313/C337, C348/C355, and C357/C376. 2 O-linked (Xyl...) (glycosaminoglycan) serine glycosylation sites follow: S383 and S388. Residues 415 to 439 (VHTRAVTEDDEDEDDDKEDEVGYIW) are disordered. Residues 422–439 (EDDEDEDDDKEDEVGYIW) show a composition bias toward acidic residues.

O-glycosylated. Glycosaminoglycan that contains chondroitin sulfate and heparan sulfate.

It is found in the secreted. The protein resides in the extracellular space. Its subcellular location is the extracellular matrix. Functionally, may play a role in cell-cell and cell-matrix interactions. May contribute to various neuronal mechanisms in the central nervous system. In Homo sapiens (Human), this protein is Testican-1 (SPOCK1).